Reading from the N-terminus, the 469-residue chain is UDP-N-acetylmuramate--L-alanine ligase (469 aa).

118–124 (GTHGKTT) lines the ATP pocket.

Belongs to the MurCDEF family.

It is found in the cytoplasm. The enzyme catalyses UDP-N-acetyl-alpha-D-muramate + L-alanine + ATP = UDP-N-acetyl-alpha-D-muramoyl-L-alanine + ADP + phosphate + H(+). It functions in the pathway cell wall biogenesis; peptidoglycan biosynthesis. Functionally, cell wall formation. This is UDP-N-acetylmuramate--L-alanine ligase from Lachnoclostridium phytofermentans (strain ATCC 700394 / DSM 18823 / ISDg) (Clostridium phytofermentans).